The following is a 173-amino-acid chain: Calcineurin subunit B (173 aa).

4 EF-hand domains span residues 20 to 55, 59 to 87, 89 to 124, and 130 to 165; these read DEID…AANP, RLMD…FSTK, NKKE…MVGN, and QLQQ…TNVY. Ca(2+) is bound by residues Asp-33, Asp-35, Ser-37, Glu-44, Asp-65, Asn-67, Ser-69, Asp-71, Glu-76, Asp-102, Asp-104, Asp-106, Tyr-108, Glu-113, Asp-143, Asp-145, Asp-147, Lys-149, and Glu-154.

This sequence belongs to the calcineurin regulatory subunit family. Composed of a catalytic subunit (A) and a regulatory subunit (B).

Regulatory subunit of calcineurin, a calcium-dependent, calmodulin stimulated protein phosphatase. Confers calcium sensitivity. This is Calcineurin subunit B (CNB1) from Yarrowia lipolytica (strain CLIB 122 / E 150) (Yeast).